Here is a 185-residue protein sequence, read N- to C-terminus: ATP-dependent protease subunit HslV (185 aa).

The active site involves Thr12. 3 residues coordinate Na(+): Ser168, Cys171, and Thr174.

Belongs to the peptidase T1B family. HslV subfamily. As to quaternary structure, a double ring-shaped homohexamer of HslV is capped on each side by a ring-shaped HslU homohexamer. The assembly of the HslU/HslV complex is dependent on binding of ATP.

The protein resides in the cytoplasm. It carries out the reaction ATP-dependent cleavage of peptide bonds with broad specificity.. With respect to regulation, allosterically activated by HslU binding. Functionally, protease subunit of a proteasome-like degradation complex believed to be a general protein degrading machinery. The polypeptide is ATP-dependent protease subunit HslV (Jannaschia sp. (strain CCS1)).